The following is a 521-amino-acid chain: Histone deacetylase HDAC1 (521 aa).

The interval lysine 7–alanine 319 is histone deacetylase. Histidine 139 is a catalytic residue. Residues glycine 376–isoleucine 521 form a disordered region. Over residues alanine 386 to aspartate 395 the composition is skewed to acidic residues. A Phosphoserine modification is found at serine 391. A compositionally biased stretch (basic and acidic residues) spans lysine 396–proline 414. Residues serine 419, serine 421, and serine 455 each carry the phosphoserine modification. At threonine 457 the chain carries Phosphothreonine. Positions serine 459–glycine 470 are enriched in basic and acidic residues. Over residues serine 476–glycine 502 the composition is skewed to low complexity. A compositionally biased stretch (gly residues) spans serine 503–alanine 513.

Belongs to the histone deacetylase family. HD type 1 subfamily. As to quaternary structure, component of a form of the Esc/E(z) complex present specifically during early embryogenesis which is composed of Caf1-55, esc, E(z), Su(z)12, Pcl and HDAC1. The Esc/E(z) complex may also associate with Pcl and HDAC1 during early embryogenesis. This complex is distinct from the PRC1 complex, which contains many other PcG proteins like Pc, Ph, Psc, Su(z)2. The 2 complexes however cooperate and interact together during the first 3 hours of development to establish PcG silencing. Interacts with the histone methyltransferase Su(var)3-9. Component of a complex that contains at least HDAC1, CoRest and Su(var)3-3/Hdm. Component of the DREAM complex at least composed of Myb, Caf1-55, mip40, mip120, mip130, E2f2, Dp, Rbf, Rbf2, lin-52, HDAC1 and l(3)mbt. Interacts with the chromatin-remodeler Mi-2. Interacts with Rrp6.

It is found in the nucleus. It carries out the reaction N(6)-acetyl-L-lysyl-[histone] + H2O = L-lysyl-[histone] + acetate. Catalyzes the deacetylation of lysine residues on the N-terminal part of the core histones (H2A, H2B, H3 and H4). Histone deacetylation may constitute a tag for epigenetic repression and plays an important role in transcriptional regulation, cell cycle progression and developmental events. For instance, deacetylation of histone H3 may be a prerequisite for the subsequent recruitment of the histone methyltransferase Su(var)3-9 to histones. Involved in position-effect variegation (PEV). In the larval brain, part of a regulatory network including the transcriptional repressors klu, dpn and E(spl)mgamma-HLH which is required for type II neuroblast self-renewal and for maintaining erm in an inactive state in intermediate neural progenitors (INP). The chain is Histone deacetylase HDAC1 from Drosophila melanogaster (Fruit fly).